We begin with the raw amino-acid sequence, 317 residues long: Glutathione synthetase (317 aa).

The region spanning 124–310 is the ATP-grasp domain; that stretch reads EKLFTAWFPE…ITGKLMDAIE (187 aa). An ATP-binding site is contributed by 150 to 207; the sequence is FRQEHGDIILKPLDGMGGASIFRVKENDPNVSVIIETLTNHGQNYAMAQTFVPDISNG. Mg(2+)-binding residues include Glu-281 and Asn-283.

It belongs to the prokaryotic GSH synthase family. Mg(2+) is required as a cofactor. Requires Mn(2+) as cofactor.

It carries out the reaction gamma-L-glutamyl-L-cysteine + glycine + ATP = glutathione + ADP + phosphate + H(+). It participates in sulfur metabolism; glutathione biosynthesis; glutathione from L-cysteine and L-glutamate: step 2/2. This chain is Glutathione synthetase, found in Vibrio vulnificus (strain CMCP6).